Here is a 484-residue protein sequence, read N- to C-terminus: UDP-N-acetylmuramate--L-alanine ligase (484 aa).

123–129 (GTHGKTT) provides a ligand contact to ATP.

Belongs to the MurCDEF family.

Its subcellular location is the cytoplasm. It carries out the reaction UDP-N-acetyl-alpha-D-muramate + L-alanine + ATP = UDP-N-acetyl-alpha-D-muramoyl-L-alanine + ADP + phosphate + H(+). Its pathway is cell wall biogenesis; peptidoglycan biosynthesis. Cell wall formation. This chain is UDP-N-acetylmuramate--L-alanine ligase, found in Pseudomonas fluorescens (strain ATCC BAA-477 / NRRL B-23932 / Pf-5).